Here is a 217-residue protein sequence, read N- to C-terminus: tRNA (guanine-N(7)-)-methyltransferase (217 aa).

S-adenosyl-L-methionine is bound by residues Glu44, Glu69, Asp96, and Asp118. Asp118 is an active-site residue. Residues Lys122, Asp154, and 191–194 contribute to the substrate site; that span reads TEYE.

It belongs to the class I-like SAM-binding methyltransferase superfamily. TrmB family.

It catalyses the reaction guanosine(46) in tRNA + S-adenosyl-L-methionine = N(7)-methylguanosine(46) in tRNA + S-adenosyl-L-homocysteine. It participates in tRNA modification; N(7)-methylguanine-tRNA biosynthesis. In terms of biological role, catalyzes the formation of N(7)-methylguanine at position 46 (m7G46) in tRNA. In Bacillus mycoides (strain KBAB4) (Bacillus weihenstephanensis), this protein is tRNA (guanine-N(7)-)-methyltransferase.